Here is a 260-residue protein sequence, read N- to C-terminus: Proteasome subunit alpha (260 aa).

Residues 237–248 (ASTDAPAAAADS) show a composition bias toward low complexity. The tract at residues 237-260 (ASTDAPAAAADSADVEERPDSEAP) is disordered. Basic and acidic residues predominate over residues 251 to 260 (VEERPDSEAP).

Belongs to the peptidase T1A family. In terms of assembly, the 20S proteasome core is composed of 14 alpha and 14 beta subunits that assemble into four stacked heptameric rings, resulting in a barrel-shaped structure. The two inner rings, each composed of seven catalytic beta subunits, are sandwiched by two outer rings, each composed of seven alpha subunits. The catalytic chamber with the active sites is on the inside of the barrel. Has a gated structure, the ends of the cylinder being occluded by the N-termini of the alpha-subunits. Is capped by the proteasome-associated ATPase, ARC.

The protein localises to the cytoplasm. The protein operates within protein degradation; proteasomal Pup-dependent pathway. The formation of the proteasomal ATPase ARC-20S proteasome complex, likely via the docking of the C-termini of ARC into the intersubunit pockets in the alpha-rings, may trigger opening of the gate for substrate entry. Interconversion between the open-gate and close-gate conformations leads to a dynamic regulation of the 20S proteasome proteolysis activity. Functionally, component of the proteasome core, a large protease complex with broad specificity involved in protein degradation. The chain is Proteasome subunit alpha from Salinispora tropica (strain ATCC BAA-916 / DSM 44818 / JCM 13857 / NBRC 105044 / CNB-440).